The chain runs to 260 residues: Tryptophan synthase alpha chain (260 aa).

Residues glutamate 52 and aspartate 63 each act as proton acceptor in the active site.

Belongs to the TrpA family. In terms of assembly, tetramer of two alpha and two beta chains.

It catalyses the reaction (1S,2R)-1-C-(indol-3-yl)glycerol 3-phosphate + L-serine = D-glyceraldehyde 3-phosphate + L-tryptophan + H2O. It functions in the pathway amino-acid biosynthesis; L-tryptophan biosynthesis; L-tryptophan from chorismate: step 5/5. Functionally, the alpha subunit is responsible for the aldol cleavage of indoleglycerol phosphate to indole and glyceraldehyde 3-phosphate. The chain is Tryptophan synthase alpha chain from Streptococcus thermophilus (strain ATCC BAA-250 / LMG 18311).